Here is a 162-residue protein sequence, read N- to C-terminus: Shikimate kinase (162 aa).

An ATP-binding site is contributed by 11 to 16 (GSGKSS). Residue S15 coordinates Mg(2+). D33, R57, and G80 together coordinate substrate. An ATP-binding site is contributed by R116. Position 132 (R132) interacts with substrate.

This sequence belongs to the shikimate kinase family. Monomer. Mg(2+) is required as a cofactor.

It localises to the cytoplasm. It catalyses the reaction shikimate + ATP = 3-phosphoshikimate + ADP + H(+). It participates in metabolic intermediate biosynthesis; chorismate biosynthesis; chorismate from D-erythrose 4-phosphate and phosphoenolpyruvate: step 5/7. In terms of biological role, catalyzes the specific phosphorylation of the 3-hydroxyl group of shikimic acid using ATP as a cosubstrate. In Helicobacter pylori (strain Shi470), this protein is Shikimate kinase.